A 96-amino-acid chain; its full sequence is uncharacterized protein (96 aa).

Residues 35–96 form a disordered region; sequence SPSGEKRSTK…KKFSSPPHPK (62 aa). Positions 38 to 52 are enriched in basic and acidic residues; that stretch reads GEKRSTKNQTKENTK. The span at 69-80 shows a compositional bias: polar residues; it reads ANQQTNENSKPL.

This is an uncharacterized protein from Dictyostelium discoideum (Social amoeba).